The following is a 227-amino-acid chain: Cytochrome c oxidase subunit 2 (227 aa).

Over Met-1–Ser-14 the chain is Mitochondrial intermembrane. Residues Pro-15–Met-45 form a helical membrane-spanning segment. Topologically, residues Leu-46–Gln-59 are mitochondrial matrix. A helical transmembrane segment spans residues Glu-60 to Met-87. Residues Asp-88–Leu-227 are Mitochondrial intermembrane-facing. Residues His-161, Cys-196, Glu-198, Cys-200, His-204, and Met-207 each contribute to the Cu cation site. Glu-198 is a Mg(2+) binding site.

It belongs to the cytochrome c oxidase subunit 2 family. In terms of assembly, component of the cytochrome c oxidase (complex IV, CIV), a multisubunit enzyme composed of 14 subunits. The complex is composed of a catalytic core of 3 subunits MT-CO1, MT-CO2 and MT-CO3, encoded in the mitochondrial DNA, and 11 supernumerary subunits COX4I, COX5A, COX5B, COX6A, COX6B, COX6C, COX7A, COX7B, COX7C, COX8 and NDUFA4, which are encoded in the nuclear genome. The complex exists as a monomer or a dimer and forms supercomplexes (SCs) in the inner mitochondrial membrane with NADH-ubiquinone oxidoreductase (complex I, CI) and ubiquinol-cytochrome c oxidoreductase (cytochrome b-c1 complex, complex III, CIII), resulting in different assemblies (supercomplex SCI(1)III(2)IV(1) and megacomplex MCI(2)III(2)IV(2)). Found in a complex with TMEM177, COA6, COX18, COX20, SCO1 and SCO2. Interacts with TMEM177 in a COX20-dependent manner. Interacts with COX20. Interacts with COX16. Cu cation is required as a cofactor.

Its subcellular location is the mitochondrion inner membrane. The enzyme catalyses 4 Fe(II)-[cytochrome c] + O2 + 8 H(+)(in) = 4 Fe(III)-[cytochrome c] + 2 H2O + 4 H(+)(out). Component of the cytochrome c oxidase, the last enzyme in the mitochondrial electron transport chain which drives oxidative phosphorylation. The respiratory chain contains 3 multisubunit complexes succinate dehydrogenase (complex II, CII), ubiquinol-cytochrome c oxidoreductase (cytochrome b-c1 complex, complex III, CIII) and cytochrome c oxidase (complex IV, CIV), that cooperate to transfer electrons derived from NADH and succinate to molecular oxygen, creating an electrochemical gradient over the inner membrane that drives transmembrane transport and the ATP synthase. Cytochrome c oxidase is the component of the respiratory chain that catalyzes the reduction of oxygen to water. Electrons originating from reduced cytochrome c in the intermembrane space (IMS) are transferred via the dinuclear copper A center (CU(A)) of subunit 2 and heme A of subunit 1 to the active site in subunit 1, a binuclear center (BNC) formed by heme A3 and copper B (CU(B)). The BNC reduces molecular oxygen to 2 water molecules using 4 electrons from cytochrome c in the IMS and 4 protons from the mitochondrial matrix. In Cavia aperea (Brazilian guinea pig), this protein is Cytochrome c oxidase subunit 2 (MT-CO2).